The primary structure comprises 396 residues: Putative cyclin-B3-1 (396 aa).

Residues 1 to 98 form a disordered region; the sequence is MLRDGNKQSK…KVLDVTAKPK (98 aa). Residues 21-32 are compositionally biased toward polar residues; that stretch reads KTTVKTSLQNRS. Positions 39–57 are enriched in low complexity; the sequence is VGRSKSRSISSIPSSAVAS. A compositionally biased stretch (polar residues) spans 76–85; the sequence is GESSSSGNKD.

This sequence belongs to the cyclin family. Cyclin AB subfamily.

This Arabidopsis thaliana (Mouse-ear cress) protein is Putative cyclin-B3-1 (CYCB3-1).